We begin with the raw amino-acid sequence, 486 residues long: Retrograde regulation protein 3 (486 aa).

A 9aaTAD 1 motif is present at residues 27–35 (ETLDFSLVT). 2 stretches are compositionally biased toward polar residues: residues 75 to 94 (NNNL…TAST) and 101 to 130 (SQSS…IGQG). The interval 75–130 (NNNLMGSQARSNSQTPTASTIYEEAESQSSYLDDMFRTSQGGRPVTQNSISSIGQG) is disordered. Phosphoserine is present on residues Ser81, Ser123, and Ser142. At Thr150 the chain carries Phosphothreonine. Residues 189-197 (SSINSDMMT) carry the 9aaTAD 2 motif. Phosphoserine occurs at positions 227, 236, and 241. The interval 243–274 (RHGSINTPRTRHTSISSNMTENIGPGSVPKIL) is disordered. Over residues 246 to 263 (SINTPRTRHTSISSNMTE) the composition is skewed to polar residues. A Phosphoserine modification is found at Ser269. Positions 285–344 (RKREFHNAVERRRRELIKQKIKELGQLVPPSLLNYDDLGKQIKPNKGIILDRTVEYLQYL) constitute a bHLH domain. The tract at residues 374-395 (ALSPFTNNHHASSGQNNSENSE) is disordered.

Binds DNA as a heterodimer with RTG1.

Its subcellular location is the nucleus. Transcription factor that regulates CIT2 gene expression. Binds to two identical sites oriented as inverted repeats 28 bp apart in a regulatory upstream activation sequence element (UASR) in the CIT2 promoter. The core binding site is 5'-GGTCAC-3'. The sequence is that of Retrograde regulation protein 3 (RTG3) from Saccharomyces cerevisiae (strain ATCC 204508 / S288c) (Baker's yeast).